Reading from the N-terminus, the 159-residue chain is Eukaryotic translation initiation factor 5A (159 aa).

K51 bears the Hypusine mark.

This sequence belongs to the eIF-5A family. Lys-51 undergoes hypusination, a unique post-translational modification that consists in the addition of a butylamino group from spermidine to lysine side chain, leading to the formation of the unusual amino acid hypusine. eIF-5As are the only known proteins to undergo this modification, which is essential for their function.

It localises to the cytoplasm. In terms of biological role, translation factor that promotes translation elongation and termination, particularly upon ribosome stalling at specific amino acid sequence contexts. Binds between the exit (E) and peptidyl (P) site of the ribosome and promotes rescue of stalled ribosome: specifically required for efficient translation of polyproline-containing peptides as well as other motifs that stall the ribosome. Acts as a ribosome quality control (RQC) cofactor by joining the RQC complex to facilitate peptidyl transfer during CAT tailing step. Functions as a regulator of autophagy. This chain is Eukaryotic translation initiation factor 5A, found in Drosophila melanogaster (Fruit fly).